Reading from the N-terminus, the 36-residue chain is Photosystem II reaction center protein M (36 aa).

Met1 is modified (blocked amino end (Met)). Over 1–11 the chain is Lumenal; sequence MEVNQLGFIAT. A helical membrane pass occupies residues 12–27; it reads ALFVLVPSVFLIILYV. The Cytoplasmic portion of the chain corresponds to 28 to 36; sequence QTESQQKSS.

It belongs to the PsbM family. In terms of assembly, PSII is composed of 1 copy each of membrane proteins PsbA, PsbB, PsbC, PsbD, PsbE, PsbF, PsbH, PsbI, PsbJ, PsbK, PsbL, PsbM, PsbT, PsbX, PsbY, PsbZ, Psb30/Ycf12, peripheral proteins PsbO, CyanoQ (PsbQ), PsbU, PsbV, PsbU, PsbV and a large number of cofactors. It forms dimeric complexes. Requires PSII binds multiple chlorophylls, carotenoids and specific lipids. as cofactor.

The protein localises to the cellular thylakoid membrane. In terms of biological role, one of the components of the core complex of photosystem II (PSII). PSII is a light-driven water:plastoquinone oxidoreductase that uses light energy to abstract electrons from H(2)O, generating O(2) and a proton gradient subsequently used for ATP formation. It consists of a core antenna complex that captures photons, and an electron transfer chain that converts photonic excitation into a charge separation. This subunit is found at the monomer-monomer interface. Probably involved in dimerization of PSII; at the monomer-monomer interface the only protein-protein contacts observed are between the 2 PsbM subunits. Lipids, chlorophylls and carotenoids contribute strongly to PSII dimerization. The protein is Photosystem II reaction center protein M of Thermostichus vulcanus (Synechococcus vulcanus).